Here is a 1210-residue protein sequence, read N- to C-terminus: ATP-dependent helicase/nuclease subunit A (1210 aa).

The region spanning 27 to 483 is the UvrD-like helicase ATP-binding domain; it reads QKRTAQQIEA…ILLKENFRSQ (457 aa). 48 to 55 lines the ATP pocket; that stretch reads ASAGSGKT. Residues 512–798 form the UvrD-like helicase C-terminal domain; the sequence is QLIAGSHAQT…NLMTIHKSKG (287 aa).

It belongs to the helicase family. AddA subfamily. In terms of assembly, heterodimer of AddA and AddB/RexB. Mg(2+) serves as cofactor.

The catalysed reaction is Couples ATP hydrolysis with the unwinding of duplex DNA by translocating in the 3'-5' direction.. It carries out the reaction ATP + H2O = ADP + phosphate + H(+). In terms of biological role, the heterodimer acts as both an ATP-dependent DNA helicase and an ATP-dependent, dual-direction single-stranded exonuclease. Recognizes the chi site generating a DNA molecule suitable for the initiation of homologous recombination. The AddA nuclease domain is required for chi fragment generation; this subunit has the helicase and 3' -&gt; 5' nuclease activities. This is ATP-dependent helicase/nuclease subunit A from Streptococcus pyogenes serotype M5 (strain Manfredo).